The chain runs to 385 residues: tRNA pseudouridine synthase D (385 aa).

The active-site Nucleophile is the Asp65. The region spanning 143–345 (GCENYFGEQR…SDGVRKAFFK (203 aa)) is the TRUD domain.

The protein belongs to the pseudouridine synthase TruD family.

It carries out the reaction uridine(13) in tRNA = pseudouridine(13) in tRNA. In terms of biological role, responsible for synthesis of pseudouridine from uracil-13 in transfer RNAs. This Aquifex aeolicus (strain VF5) protein is tRNA pseudouridine synthase D.